The chain runs to 65 residues: Large ribosomal subunit protein bL35 (65 aa).

The protein belongs to the bacterial ribosomal protein bL35 family.

The protein is Large ribosomal subunit protein bL35 of Blochmanniella pennsylvanica (strain BPEN).